The following is a 230-amino-acid chain: Orotidine 5'-phosphate decarboxylase (230 aa).

Substrate is bound by residues aspartate 11, lysine 34, 61 to 70, threonine 117, arginine 179, glutamine 188, glycine 208, and arginine 209; that span reads DLKLHDIPNT. The Proton donor role is filled by lysine 63.

The protein belongs to the OMP decarboxylase family. Type 1 subfamily. In terms of assembly, homodimer.

It catalyses the reaction orotidine 5'-phosphate + H(+) = UMP + CO2. Its pathway is pyrimidine metabolism; UMP biosynthesis via de novo pathway; UMP from orotate: step 2/2. Catalyzes the decarboxylation of orotidine 5'-monophosphate (OMP) to uridine 5'-monophosphate (UMP). In Streptococcus pyogenes serotype M18 (strain MGAS8232), this protein is Orotidine 5'-phosphate decarboxylase.